The following is a 181-amino-acid chain: MASSMLSSAAVVTSQLQATMVAPFTGLKSSAAFPVTRKTNTDITSIASNGGRVSCMKVWPPIGKKKFETLSYLPDLSDVELAKEVDYLLRNKWIPCVEFELEHGFVYREHGSTPGYYDGRYWTMWKLPLFGCTDSAQVLKEVQECKKEYPNALIRIIGFDNNRQVQCISFIAYKPPSFTDA.

The transit peptide at 1-54 (MASSMLSSAAVVTSQLQATMVAPFTGLKSSAAFPVTRKTNTDITSIASNGGRVS) directs the protein to the chloroplast.

This sequence belongs to the RuBisCO small chain family. In terms of assembly, heterohexadecamer of 8 large and 8 small subunits.

It is found in the plastid. The protein resides in the chloroplast. In terms of biological role, ruBisCO catalyzes two reactions: the carboxylation of D-ribulose 1,5-bisphosphate, the primary event in carbon dioxide fixation, as well as the oxidative fragmentation of the pentose substrate. Both reactions occur simultaneously and in competition at the same active site. Although the small subunit is not catalytic it is essential for maximal activity. The polypeptide is Ribulose bisphosphate carboxylase small subunit, chloroplastic (Raphanus sativus (Radish)).